Here is a 1886-residue protein sequence, read N- to C-terminus: Nuclear pore membrane glycoprotein 210 (1886 aa).

Residues 1-25 form the signal peptide; sequence MARASLIQPGLWALLLLQAVGPAVA. Topologically, residues 26 to 1805 are perinuclear space; the sequence is AKLNIPKVLL…GASLLSHFLD (1780 aa). N-linked (GlcNAc...) asparagine glycans are attached at residues Asn337, Asn484, Asn681, and Asn1039. The 74-residue stretch at 1078–1151 folds into the BIG2 domain; sequence FPPFRLIPRK…VQAVDAETGK (74 aa). The helical transmembrane segment at 1806–1828 threads the bilayer; the sequence is SYQVMFFTFFALLAGTAVTIIAY. The Cytoplasmic segment spans residues 1829 to 1886; that stretch reads HTVCAPRELASPLALTPHASPQHSPHYLASSPTAFNTLPSDRKASPPSGLWSPAYASH. Ser1839 bears the Phosphoserine mark. Thr1844 is subject to Phosphothreonine. Positions 1866–1886 are disordered; that stretch reads LPSDRKASPPSGLWSPAYASH. A phosphoserine mark is found at Ser1873, Ser1876, Ser1880, and Ser1885.

It belongs to the NUP210 family. As to quaternary structure, forms dimers and possibly higher-order oligomers. N-glycosylated, but not all potential glycosylation sites may be used. Contains high-mannose type oligosaccharides. In terms of processing, phosphorylated at Ser-1880 in mitosis specifically; not phosphorylated in interphase.

Its subcellular location is the nucleus. It is found in the nuclear pore complex. The protein localises to the nucleus membrane. The protein resides in the endoplasmic reticulum membrane. Its function is as follows. Nucleoporin essential for nuclear pore assembly and fusion, nuclear pore spacing, as well as structural integrity. The protein is Nuclear pore membrane glycoprotein 210 (Nup210) of Rattus norvegicus (Rat).